The primary structure comprises 111 residues: Large ribosomal subunit protein uL22 (111 aa).

Belongs to the universal ribosomal protein uL22 family. As to quaternary structure, part of the 50S ribosomal subunit.

Functionally, this protein binds specifically to 23S rRNA; its binding is stimulated by other ribosomal proteins, e.g. L4, L17, and L20. It is important during the early stages of 50S assembly. It makes multiple contacts with different domains of the 23S rRNA in the assembled 50S subunit and ribosome. Its function is as follows. The globular domain of the protein is located near the polypeptide exit tunnel on the outside of the subunit, while an extended beta-hairpin is found that lines the wall of the exit tunnel in the center of the 70S ribosome. The sequence is that of Large ribosomal subunit protein uL22 from Clostridium novyi (strain NT).